Here is a 219-residue protein sequence, read N- to C-terminus: Leucyl/phenylalanyl-tRNA--protein transferase (219 aa).

It belongs to the L/F-transferase family.

Its subcellular location is the cytoplasm. The catalysed reaction is N-terminal L-lysyl-[protein] + L-leucyl-tRNA(Leu) = N-terminal L-leucyl-L-lysyl-[protein] + tRNA(Leu) + H(+). It catalyses the reaction N-terminal L-arginyl-[protein] + L-leucyl-tRNA(Leu) = N-terminal L-leucyl-L-arginyl-[protein] + tRNA(Leu) + H(+). It carries out the reaction L-phenylalanyl-tRNA(Phe) + an N-terminal L-alpha-aminoacyl-[protein] = an N-terminal L-phenylalanyl-L-alpha-aminoacyl-[protein] + tRNA(Phe). Functions in the N-end rule pathway of protein degradation where it conjugates Leu, Phe and, less efficiently, Met from aminoacyl-tRNAs to the N-termini of proteins containing an N-terminal arginine or lysine. The polypeptide is Leucyl/phenylalanyl-tRNA--protein transferase (Leptospira borgpetersenii serovar Hardjo-bovis (strain JB197)).